Reading from the N-terminus, the 263-residue chain is Thiazole synthase (263 aa).

Residue Lys-100 is the Schiff-base intermediate with DXP of the active site. 1-deoxy-D-xylulose 5-phosphate contacts are provided by residues Gly-161, 187-188 (AG), and 209-210 (NT).

This sequence belongs to the ThiG family. In terms of assembly, homotetramer. Forms heterodimers with either ThiH or ThiS.

Its subcellular location is the cytoplasm. It catalyses the reaction [ThiS sulfur-carrier protein]-C-terminal-Gly-aminoethanethioate + 2-iminoacetate + 1-deoxy-D-xylulose 5-phosphate = [ThiS sulfur-carrier protein]-C-terminal Gly-Gly + 2-[(2R,5Z)-2-carboxy-4-methylthiazol-5(2H)-ylidene]ethyl phosphate + 2 H2O + H(+). It participates in cofactor biosynthesis; thiamine diphosphate biosynthesis. Its function is as follows. Catalyzes the rearrangement of 1-deoxy-D-xylulose 5-phosphate (DXP) to produce the thiazole phosphate moiety of thiamine. Sulfur is provided by the thiocarboxylate moiety of the carrier protein ThiS. In vitro, sulfur can be provided by H(2)S. The sequence is that of Thiazole synthase from Shouchella clausii (strain KSM-K16) (Alkalihalobacillus clausii).